A 427-amino-acid polypeptide reads, in one-letter code: MNTFSVSRLALALAFGVTLTACSSTPPDQRPSDQTAPGTSSRPILSAKEAQNFDAQHYFASLTPGAAAWNPSPITLPAQPDFVVGPAGTQGVTHTTIQAAVDAAIIKRTNKRQYIAVMPGEYQGTVYVPAAPGGITLYGTGEKPIDVKIGLSLDGGMSPADWRHDVNPRGKYMPGKPAWYMYDSCQSKRSDSIGVLCSAVFWSQNNGLQLQNLTIENTLGDSVDAGNHPAVALRTDGDQVQINNVNILGRQNTFFVTNSGVQNRLETNRQPRTLVTNSYIEGDVDIVSGRGAVVFDNTEFRVVNSRTQQEAYVFAPATLSNIYYGFLAVNSRFNAFGDGVAQLGRSLDVDANTNGQVVIRDSAINEGFNTAKPWADAVISNRPFAGNTGSVDDNDEIQRNLNDTNYNRMWEYNNRGVGSKVVAEAKK.

The N-terminal stretch at 1 to 21 is a signal peptide; that stretch reads MNTFSVSRLALALAFGVTLTA. Cys22 carries the N-palmitoyl cysteine lipid modification. Residue Cys22 is the site of S-diacylglycerol cysteine attachment. The interval 23–42 is disordered; the sequence is SSTPPDQRPSDQTAPGTSSR. Cys185 and Cys197 form a disulfide bridge. Asp285 (nucleophile) is an active-site residue. Arg345 contributes to the substrate binding site.

Belongs to the pectinesterase family.

It is found in the cell outer membrane. Putative thioesterase. Does not bind pectin, and has no pectinesterase activity. This is Putative acyl-CoA thioester hydrolase YbhC (ybhC) from Escherichia coli (strain K12).